We begin with the raw amino-acid sequence, 1034 residues long: Putative beta-glucuronidase (1034 aa).

Glu-432 functions as the Proton donor in the catalytic mechanism. The region spanning 909–1034 (VDISAEEGVL…GPFIDELFID (126 aa)) is the CBM6 domain.

Belongs to the glycosyl hydrolase 2 family.

The protein localises to the cytoplasm. The enzyme catalyses a beta-D-glucuronoside + H2O = D-glucuronate + an alcohol. In terms of biological role, glycoside hydrolase that may be involved in ulvan degradation. Ulvan is the main polysaccharide component of the Ulvales (green seaweed) cell wall. It is composed of disaccharide building blocks comprising 3-sulfated rhamnose (Rha3S) linked to D-glucuronic acid (GlcA), L-iduronic acid (IduA), or D-xylose (Xyl). The protein is Putative beta-glucuronidase of Formosa agariphila (strain DSM 15362 / KCTC 12365 / LMG 23005 / KMM 3901 / M-2Alg 35-1).